Here is a 314-residue protein sequence, read N- to C-terminus: Transcriptional activator RhrA (314 aa).

One can recognise an HTH araC/xylS-type domain in the interval 210 to 310 (ASIKMRVEQN…GVRPSDLRRL (101 aa)). 2 DNA-binding regions (H-T-H motif) span residues 228 to 249 (TDVAEAERITPRAIQKFFSREG) and 277 to 300 (ISQIAYNVGFNDLSYFNRTFRSRY).

Its function is as follows. Transcriptional activator of the rhizobactin regulon. The protein is Transcriptional activator RhrA (rhrA) of Rhizobium meliloti (strain 1021) (Ensifer meliloti).